A 204-amino-acid polypeptide reads, in one-letter code: High frequency lysogenization protein HflD homolog (204 aa).

This sequence belongs to the HflD family.

The protein localises to the cytoplasm. It localises to the cell inner membrane. This Shewanella amazonensis (strain ATCC BAA-1098 / SB2B) protein is High frequency lysogenization protein HflD homolog.